Reading from the N-terminus, the 796-residue chain is Protein translocase subunit SecA 2 (796 aa).

Residues Gln84, 102–106 (GEGKT), and Asp496 each bind ATP.

Belongs to the SecA family. As to quaternary structure, monomer and homodimer. Part of the essential Sec protein translocation apparatus which comprises SecA, SecYEG and auxiliary proteins SecDF. Other proteins may also be involved.

The protein localises to the cell membrane. The protein resides in the cytoplasm. The catalysed reaction is ATP + H2O + cellular proteinSide 1 = ADP + phosphate + cellular proteinSide 2.. Its function is as follows. Part of the Sec protein translocase complex. Interacts with the SecYEG preprotein conducting channel. Has a central role in coupling the hydrolysis of ATP to the transfer of proteins into and across the cell membrane, serving as an ATP-driven molecular motor driving the stepwise translocation of polypeptide chains across the membrane. This is Protein translocase subunit SecA 2 from Staphylococcus haemolyticus (strain JCSC1435).